Reading from the N-terminus, the 4171-residue chain is Cytoplasmic dynein 2 heavy chain 1 (4171 aa).

A stem region spans residues 1–1598 (MSSDSKDQRK…VLRQVSSEFE (1598 aa)). ATP is bound at residue 115–122 (GKELTEGN). Coiled coils occupy residues 164-203 (ANDY…CDEL), 629-693 (KQLE…KEEE), 829-861 (DLEE…AERL), 927-1048 (EIAE…KEKR), and 1354-1383 (SRQS…LEQK). 4 AAA regions span residues 1599-1823 (YTYE…VLGG), 1883-2100 (EPLG…VRSH), 2184-2432 (VTKE…WVVS), and 2527-2767 (RFAF…PIKY). ATP contacts are provided by residues 1637–1644 (GPAGTGKT), 1921–1928 (GAAGSGKS), 2226–2233 (GTTGCGKQ), and 2565–2572 (GRPGFGRR). Residues 2776 to 3064 (QLLGYKRLTL…VDLDREQDTI (289 aa)) are stalk. Coiled-coil stretches lie at residues 2790-2877 (ERLK…KEVQ), 2999-3059 (EKIA…DLDR), and 3308-3336 (ELEE…LLLQ). 2 AAA regions span residues 3140–3367 (ASLE…IITK) and 3575–3784 (LMDF…FVEQ).

Belongs to the dynein heavy chain family. The cytoplasmic dynein complex 2 is probably composed by a heavy chain che-3 homodimer and a number of light intermediate chains.

It localises to the cell projection. The protein resides in the cilium membrane. The protein localises to the cytoplasm. It is found in the cytoskeleton. In terms of biological role, functions as a motor for intraflagellar retrograde transport in chemosensory neurons. Functions in cilia biogenesis. This Caenorhabditis elegans protein is Cytoplasmic dynein 2 heavy chain 1.